Consider the following 719-residue polypeptide: Serine/threonine-protein kinase PAK 5 (719 aa).

Disordered regions lie at residues 1 to 28 (MFGKKKKKIEISGPSNFEHRVHTGFDPQ), 96 to 118 (RSNSLRKESPPTPDQGAASRIQG), 226 to 245 (SPLDYSFQLTPSRTAGTSRC), 253 to 298 (SESD…PMMP), and 339 to 372 (VFSPPLSGSDTYPRGPTKLPQSQSKAGYSSGSHQ). The CRIB domain maps to 11 to 24 (ISGPSNFEHRVHTG). The interval 25 to 448 (FDPQEQKFTG…VVSPGDPREY (424 aa)) is linker. Ser-104 bears the Phosphoserine mark. Thr-107 is subject to Phosphothreonine. The span at 226-244 (SPLDYSFQLTPSRTAGTSR) shows a compositional bias: polar residues. A compositionally biased stretch (polar residues) spans 357–372 (LPQSQSKAGYSSGSHQ). One can recognise a Protein kinase domain in the interval 449 to 700 (LDNFIKIGEG…AQELLGHPFL (252 aa)). Residues 455–463 (IGEGSTGIV) and Lys-478 contribute to the ATP site. Asp-568 functions as the Proton acceptor in the catalytic mechanism.

This sequence belongs to the protein kinase superfamily. STE Ser/Thr protein kinase family. STE20 subfamily. As to quaternary structure, interacts tightly with GTP-bound but not GDP-bound CDC42/p21 and RAC1. Interacts with MARK2, leading to inhibit MARK2 independently of kinase activity. Interacts with RHOD and RHOH. Autophosphorylated when activated by CDC42/p21. Highly expressed in brain and eye. Also expressed in adrenal gland, pancreas, prostate and testes. Within the brain, expression is restricted to neurons. Present in brain but not in kidney, lung and spleen (at protein level).

It is found in the mitochondrion. Its subcellular location is the cytoplasm. The protein resides in the nucleus. It carries out the reaction L-seryl-[protein] + ATP = O-phospho-L-seryl-[protein] + ADP + H(+). The catalysed reaction is L-threonyl-[protein] + ATP = O-phospho-L-threonyl-[protein] + ADP + H(+). Functionally, serine/threonine protein kinase that plays a role in a variety of different signaling pathways including cytoskeleton regulation, cell migration, proliferation or cell survival. Activation by various effectors including growth factor receptors or active CDC42 and RAC1 results in a conformational change and a subsequent autophosphorylation on several serine and/or threonine residues. Phosphorylates the proto-oncogene RAF1 and stimulates its kinase activity. Promotes cell survival by phosphorylating the BCL2 antagonist of cell death BAD. Phosphorylates CTNND1, probably to regulate cytoskeletal organization and cell morphology. Keeps microtubules stable through MARK2 inhibition and destabilizes the F-actin network leading to the disappearance of stress fibers and focal adhesions. In Mus musculus (Mouse), this protein is Serine/threonine-protein kinase PAK 5.